We begin with the raw amino-acid sequence, 44 residues long: Alpha-amylase inhibitor helianthamide (44 aa).

Disulfide bonds link Cys-6–Cys-38, Cys-16–Cys-33, and Cys-20–Cys-39. Residues 7-10 (YIYH) are inhibitory motif.

It belongs to the sea anemone alpha-amylase inhibitor family.

It localises to the secreted. In terms of biological role, specific pancreatic alpha-amylase (AMY2A) inhibitor. The recombinant peptide inhibits human pancreatic (Ki=0.01 nM) and porcine pancreatic alpha-amylases (Ki=0.1 nM). This is Alpha-amylase inhibitor helianthamide from Stichodactyla helianthus (Sun anemone).